A 434-amino-acid chain; its full sequence is Transcription initiation factor IIE subunit alpha (434 aa).

Residues 8–99 form the HTH TFE/IIEalpha-type domain; that stretch reads VQRLIKMIMR…DFCSTIDSIK (92 aa). The C4-type zinc-finger motif lies at 124–151; sequence CPFCNKKFSSLDVLSLVTNEGTFACNVC. Disordered stretches follow at residues 217-251, 357-408, and 415-434; these read QQNLSKSNSDVRLSTSSPSITVDFSADKETDEKRE, STDY…EMQE, and INGFNEDDEDDEDEADFEDV. Positions 226-238 are enriched in polar residues; it reads DVRLSTSSPSITV. 2 stretches are compositionally biased toward basic and acidic residues: residues 241-251 and 376-385; these read SADKETDEKRE and IQNKRTKSIE. Residues 386–399 are compositionally biased toward polar residues; it reads ENNSLPPIVSTNGI. Positions 419–434 are enriched in acidic residues; sequence NEDDEDDEDEADFEDV.

It belongs to the TFIIE alpha subunit family. TFIIE is a tetramer of two alpha (tfa1) and two beta (tfa2) subunits.

The protein localises to the nucleus. Functionally, recruits TFIIH to the initiation complex and stimulates the RNA polymerase II C-terminal domain kinase and DNA-dependent ATPase activities of TFIIH. Both TFIIH and TFIIE are required for promoter clearance by RNA polymerase. The protein is Transcription initiation factor IIE subunit alpha (tfa1) of Schizosaccharomyces pombe (strain 972 / ATCC 24843) (Fission yeast).